The chain runs to 349 residues: Glycerol-3-phosphate dehydrogenase [NAD(P)+] (349 aa).

NADPH is bound by residues Trp20, Arg43, Arg44, and Lys117. Residues Lys117 and Gly147 each coordinate sn-glycerol 3-phosphate. NADPH is bound at residue Ala151. Sn-glycerol 3-phosphate-binding residues include Lys202, Asp255, Ser265, Arg266, and Asn267. Lys202 serves as the catalytic Proton acceptor. Position 266 (Arg266) interacts with NADPH. NADPH-binding residues include Val297 and Glu299.

It belongs to the NAD-dependent glycerol-3-phosphate dehydrogenase family.

Its subcellular location is the cytoplasm. The enzyme catalyses sn-glycerol 3-phosphate + NAD(+) = dihydroxyacetone phosphate + NADH + H(+). It carries out the reaction sn-glycerol 3-phosphate + NADP(+) = dihydroxyacetone phosphate + NADPH + H(+). It participates in membrane lipid metabolism; glycerophospholipid metabolism. Functionally, catalyzes the reduction of the glycolytic intermediate dihydroxyacetone phosphate (DHAP) to sn-glycerol 3-phosphate (G3P), the key precursor for phospholipid synthesis. The polypeptide is Glycerol-3-phosphate dehydrogenase [NAD(P)+] (Mycobacterium leprae (strain TN)).